We begin with the raw amino-acid sequence, 209 residues long: Large ribosomal subunit protein uL3 (209 aa).

The interval 113–155 (TSRGHGYQGNIKRHHQSRGPETHGSRYHRIPGSMGSIINRVPK) is disordered.

Belongs to the universal ribosomal protein uL3 family. In terms of assembly, part of the 50S ribosomal subunit. Forms a cluster with proteins L14 and L19.

One of the primary rRNA binding proteins, it binds directly near the 3'-end of the 23S rRNA, where it nucleates assembly of the 50S subunit. The polypeptide is Large ribosomal subunit protein uL3 (Lactobacillus delbrueckii subsp. bulgaricus (strain ATCC 11842 / DSM 20081 / BCRC 10696 / JCM 1002 / NBRC 13953 / NCIMB 11778 / NCTC 12712 / WDCM 00102 / Lb 14)).